Here is a 659-residue protein sequence, read N- to C-terminus: Mannosyl-oligosaccharide 1,2-alpha-mannosidase IA (659 aa).

At 1–48 the chain is on the cytoplasmic side; that stretch reads MPVGGLLPLFSSPAGGGLGGGLGGGLGGGGGGGGRKGSGPSAFRLTEK. The helical; Signal-anchor for type II membrane protein transmembrane segment at 49 to 69 threads the bilayer; the sequence is FVLLLVFSAFITLCFGAIFFL. Residues 70-659 are Lumenal-facing; the sequence is PDSSKLLSGV…NIKKVEDNEK (590 aa). The tract at residues 88–121 is disordered; it reads QPAADHKPGPGARAEDAADGRARPGEEGAPGDPA. The segment covering 91 to 113 has biased composition (basic and acidic residues); sequence ADHKPGPGARAEDAADGRARPGE. Cysteines 482 and 514 form a disulfide. Residue glutamate 528 is the Proton donor of the active site. Position 639 (threonine 639) interacts with Ca(2+).

Belongs to the glycosyl hydrolase 47 family. Ca(2+) serves as cofactor.

The protein resides in the endoplasmic reticulum membrane. The catalysed reaction is N(4)-(alpha-D-Man-(1-&gt;2)-alpha-D-Man-(1-&gt;2)-alpha-D-Man-(1-&gt;3)-[alpha-D-Man-(1-&gt;2)-alpha-D-Man-(1-&gt;3)-[alpha-D-Man-(1-&gt;2)-alpha-D-Man-(1-&gt;6)]-alpha-D-Man-(1-&gt;6)]-beta-D-Man-(1-&gt;4)-beta-D-GlcNAc-(1-&gt;4)-beta-D-GlcNAc)-L-asparaginyl-[protein] (N-glucan mannose isomer 9A1,2,3B1,2,3) + 4 H2O = N(4)-(alpha-D-Man-(1-&gt;3)-[alpha-D-Man-(1-&gt;3)-[alpha-D-Man-(1-&gt;6)]-alpha-D-Man-(1-&gt;6)]-beta-D-Man-(1-&gt;4)-beta-D-GlcNAc-(1-&gt;4)-beta-D-GlcNAc)-L-asparaginyl-[protein] (N-glucan mannose isomer 5A1,2) + 4 beta-D-mannose. The enzyme catalyses N(4)-(alpha-D-Man-(1-&gt;2)-alpha-D-Man-(1-&gt;2)-alpha-D-Man-(1-&gt;3)-[alpha-D-Man-(1-&gt;3)-[alpha-D-Man-(1-&gt;2)-alpha-D-Man-(1-&gt;6)]-alpha-D-Man-(1-&gt;6)]-beta-D-Man-(1-&gt;4)-beta-D-GlcNAc-(1-&gt;4)-beta-D-GlcNAc)-L-asparaginyl-[protein] (N-glucan mannose isomer 8A1,2,3B1,3) + 3 H2O = N(4)-(alpha-D-Man-(1-&gt;3)-[alpha-D-Man-(1-&gt;3)-[alpha-D-Man-(1-&gt;6)]-alpha-D-Man-(1-&gt;6)]-beta-D-Man-(1-&gt;4)-beta-D-GlcNAc-(1-&gt;4)-beta-D-GlcNAc)-L-asparaginyl-[protein] (N-glucan mannose isomer 5A1,2) + 3 beta-D-mannose. It functions in the pathway protein modification; protein glycosylation. Its activity is regulated as follows. Inhibited by both 1-deoxymannojirimycin and kifunensine. Involved in the maturation of Asn-linked oligosaccharides. Progressively trim alpha-1,2-linked mannose residues from Man(9)GlcNAc(2) to produce Man(5)GlcNAc(2). The polypeptide is Mannosyl-oligosaccharide 1,2-alpha-mannosidase IA (MAN1A1) (Sus scrofa (Pig)).